We begin with the raw amino-acid sequence, 434 residues long: ATP-dependent protease ATPase subunit HslU (434 aa).

ATP is bound by residues isoleucine 18, 60–65 (GVGKTE), aspartate 247, glutamate 312, and arginine 384.

The protein belongs to the ClpX chaperone family. HslU subfamily. A double ring-shaped homohexamer of HslV is capped on each side by a ring-shaped HslU homohexamer. The assembly of the HslU/HslV complex is dependent on binding of ATP.

The protein resides in the cytoplasm. ATPase subunit of a proteasome-like degradation complex; this subunit has chaperone activity. The binding of ATP and its subsequent hydrolysis by HslU are essential for unfolding of protein substrates subsequently hydrolyzed by HslV. HslU recognizes the N-terminal part of its protein substrates and unfolds these before they are guided to HslV for hydrolysis. The sequence is that of ATP-dependent protease ATPase subunit HslU from Brucella melitensis biotype 1 (strain ATCC 23456 / CCUG 17765 / NCTC 10094 / 16M).